We begin with the raw amino-acid sequence, 498 residues long: DELTA-thalatoxin-Avl2a (498 aa).

The N-terminal stretch at 1–22 (MSPYFKLSSALIFLAITMEALC) is a signal peptide. A propeptide spanning residues 23–35 (SPIENTSTSNKDN) is cleaved from the precursor. Residues 23-359 (SPIENTSTSN…GFLHFGCSFL (337 aa)) enclose the MACPF domain. Positions 135 to 159 (AAVTNNIASSEEEVQGLSLNLKAYS) form a coiled coil. Cystine bridges form between cysteine 389/cysteine 402, cysteine 396/cysteine 410, and cysteine 412/cysteine 422. An EGF-like domain is found at 410 to 422 (CECGGPYDLARTC).

It is found in the secreted. It localises to the nematocyst. Is lethal to mice, and may cause hemolytic activity. This chain is DELTA-thalatoxin-Avl2a, found in Actineria villosa (Okinawan sea anemone).